The chain runs to 965 residues: Calsyntenin-2 (965 aa).

An N-terminal signal peptide occupies residues 1 to 20 (MLPGRLCLVPLLLALGVGSG). Residues 21–835 (GGSGDGGDSR…SIQRSSVVPS (815 aa)) are Extracellular-facing. 2 Cadherin domains span residues 46–162 (IETS…APTF) and 163–282 (KEPA…MPLF). N-linked (GlcNAc...) asparagine glycosylation is found at Asn-58 and Asn-100. Residues Asn-344, Asn-376, Asn-720, and Asn-733 are each glycosylated (N-linked (GlcNAc...) asparagine). A helical membrane pass occupies residues 836–856 (IATVVIIISVCMLVFVVAMGV). Residues 857–965 (YRVRIAHQHF…NTAGVINIWK (109 aa)) are Cytoplasmic-facing. Residues 891-965 (PMEKHEGPGH…NTAGVINIWK (75 aa)) are disordered. Over residues 892-902 (MEKHEGPGHGE) the composition is skewed to basic and acidic residues. Positions 903-915 (DETEGEEEEEAEE) are enriched in acidic residues. Residues 942 to 959 (QSGTSSQRPERSTWNTAG) are compositionally biased toward polar residues.

Belongs to the calsyntenin family. Proteolytically processed under normal cellular conditions. A primary zeta-cleavage generates a large extracellular (soluble) N-terminal domain (sAlc) and a short C-terminal transmembrane fragment (CTF1). A secondary cleavage catalyzed by gamma-secretase within the transmembrane domain releases the beta-Alc-gamma chain in the extracellular milieu and produces an intracellular fragment (AlcICD). This processing is strongly suppressed in the tripartite complex formed with APBA2 and APP, which seems to prevent the association with PSEN1.

It is found in the postsynaptic cell membrane. The protein localises to the endoplasmic reticulum membrane. Its subcellular location is the golgi apparatus membrane. It localises to the cell projection. The protein resides in the dendrite. In terms of biological role, postsynaptic adhesion molecule that binds to presynaptic neurexins to mediate synapse formation, and which is involved in learning and memory. Promotes synapse development by acting as a cell adhesion molecule at the postsynaptic membrane, which associates with neurexin-alpha at the presynaptic membrane. The chain is Calsyntenin-2 from Rattus norvegicus (Rat).